A 107-amino-acid polypeptide reads, in one-letter code: Ferredoxin (107 aa).

Positions 1 to 8 (MVSGVSRN) are excised as a propeptide. The [2Fe-2S] cluster site is built by cysteine 45, cysteine 51, and cysteine 54.

[2Fe-2S] cluster serves as cofactor.

Its subcellular location is the hydrogenosome. In terms of biological role, ferredoxins are iron-sulfur proteins that transfer electrons in a wide variety of metabolic reactions. The chain is Ferredoxin from Psalteriomonas lanterna (Amoeboflagellate).